The primary structure comprises 371 residues: 4-hydroxy-3-methylbut-2-en-1-yl diphosphate synthase (flavodoxin) (371 aa).

4 residues coordinate [4Fe-4S] cluster: Cys270, Cys273, Cys305, and Glu312.

Belongs to the IspG family. Requires [4Fe-4S] cluster as cofactor.

It carries out the reaction (2E)-4-hydroxy-3-methylbut-2-enyl diphosphate + oxidized [flavodoxin] + H2O + 2 H(+) = 2-C-methyl-D-erythritol 2,4-cyclic diphosphate + reduced [flavodoxin]. The protein operates within isoprenoid biosynthesis; isopentenyl diphosphate biosynthesis via DXP pathway; isopentenyl diphosphate from 1-deoxy-D-xylulose 5-phosphate: step 5/6. Functionally, converts 2C-methyl-D-erythritol 2,4-cyclodiphosphate (ME-2,4cPP) into 1-hydroxy-2-methyl-2-(E)-butenyl 4-diphosphate. This chain is 4-hydroxy-3-methylbut-2-en-1-yl diphosphate synthase (flavodoxin), found in Shewanella frigidimarina (strain NCIMB 400).